Consider the following 144-residue polypeptide: Large ribosomal subunit protein uL11 (144 aa).

The protein belongs to the universal ribosomal protein uL11 family. Part of the ribosomal stalk of the 50S ribosomal subunit. Interacts with L10 and the large rRNA to form the base of the stalk. L10 forms an elongated spine to which L12 dimers bind in a sequential fashion forming a multimeric L10(L12)X complex. Post-translationally, one or more lysine residues are methylated.

Its function is as follows. Forms part of the ribosomal stalk which helps the ribosome interact with GTP-bound translation factors. This Rhodococcus erythropolis (strain PR4 / NBRC 100887) protein is Large ribosomal subunit protein uL11.